Consider the following 378-residue polypeptide: Stimulator of interferon genes protein (378 aa).

Residues 1 to 17 (MPHSSLHPSIPQPRGLR) lie on the Cytoplasmic side of the membrane. Residues 1 to 190 (MPHSSLHPSI…IYNQFHNNTL (190 aa)) form a mediates interaction with ZDHHC1 and ZDHHC11 region. The chain crosses the membrane as a helical span at residues 18–34 (AQKAALVLLSACLVALW). Residues 35–44 (GLGEPPDYTL) are Lumenal-facing. A helical transmembrane segment spans residues 45 to 69 (KWLVLHLASQQMGLLIKGICSLAEE). Residues 70–91 (LCHVHSRYHGSYWRAVRACLCS) are Cytoplasmic-facing. A lipid anchor (S-palmitoyl cysteine) is attached at Cys88. The chain crosses the membrane as a helical span at residues 92-106 (SMRCGALLLLSCYFY). Topologically, residues 107–116 (CSLPNMADLP) are lumenal. The chain crosses the membrane as a helical span at residues 117-134 (FTWMLALLGLSQALNILL). Residues 135–378 (GLQGLAPAEV…KPLPLRSDVF (244 aa)) are Cytoplasmic-facing. Lys150 is covalently cross-linked (Glycyl lysine isopeptide (Lys-Gly) (interchain with G-Cter in ubiquitin)). Positions 153–339 (FNVAHGLAWS…LQHLRQEERE (187 aa)) are cyclic dinucleotide-binding domain (CBD). Ser162 and Tyr167 together coordinate 2',3'-cGAMP. 3',3'-c-di-GMP-binding residues include Ser162 and Tyr167. Tyr167 contacts 2',3'-cUAMP. Lys236 participates in a covalent cross-link: Glycyl lysine isopeptide (Lys-Gly) (interchain with G-Cter in ubiquitin). The 2',3'-cGAMP site is built by Arg238 and Thr263. 2 residues coordinate 2',3'-cUAMP: Arg238 and Thr263. Residues 238-241 (RVYT) and Thr263 contribute to the 3',3'-c-di-GMP site. A C-terminal tail (CTT) region spans residues 339–378 (EVTMGSTETSVMPGSSVLSQEPELLISGLEKPLPLRSDVF). Ser354 is modified (phosphoserine). Residues Ser357 and Ser365 each carry the phosphoserine; by TBK1 modification. The pLxIS motif signature appears at 362 to 365 (LLIS).

It belongs to the STING family. As to quaternary structure, homodimer; forms a homodimer in absence of cyclic nucleotide (c-di-GMP or cGAMP); 'Lys-63'-linked ubiquitination at Lys-150 is required for homodimerization. Homotetramer; in presence of cyclic nucleotide (c-di-GMP or cGAMP), forms tetramers and higher-order oligomers through side-by-side packing. Interacts (when phosphorylated) with IRF3; following activation and phosphorylation on the pLxIS motif by TBK1, recruits IRF3. Interacts with RIGI, MAVS and SSR2. Interacts with RNF5 and TRIM56. Interacts with TBK1; when homodimer, leading to subsequent production of IFN-beta. Interacts with IFIT1 and IFIT2. Interacts with TRIM29; this interaction induces STING1 ubiquitination and subsequent degradation. Associates with the MHC-II complex. Interacts with STEEP1; interaction takes place upon cGAMP-activation and STING1 phosphorylation by MAP3K7/TAK1 and promotes STING1 translocation to COPII vesicles. Interacts with SEC24A, SEC24B and SEC24C; promoting translocation to COPII vesicles. Interacts (when ubiquitinated) with SQSTM1; leading to relocalization to autophagosomes. Interacts with SURF4. Interacts with HNRNPA2B1. Interacts with ZDHHC1; ZDHHC1 constitutively interacts with STING1 and in presence of DNA viruses activates it by promoting its cGAMP-induced oligomerization and the recruitment of downstream signaling components. Interacts with ZDHHC11; in presence of DNA viruses promotes the recruitment of IRF3 to STING1. Interacts with TOMM70. Interacts with TAB1; promoting recruitment of TAB1 to the endoplasmic reticulum membrane and subsequent activation of MAP3K7/TAK1. Interacts (via transmembrane domain) with TMEM203. Interacts with DDX41. Post-translationally, phosphorylation by TBK1 leads to activation and production of IFN-beta. Following cyclic nucleotide (c-di-GMP or cGAMP)-binding, activation and translocation from the endoplasmic reticulum, STING1 is phosphorylated by TBK1 at Ser-365 in the pLxIS motif. The phosphorylated pLxIS motif constitutes an IRF3-binding motif, leading to recruitment of the transcription factor IRF3 to induce type-I interferons and other cytokines. Phosphorylated on tyrosine residues upon MHC-II aggregation. Dephosphorylation by PPP6C leads to inactivation and decreased production of IFN-beta. Phosphorylation at Ser-357 is also required to activate IRF3. Phosphorylation at Ser-354 by MAP3K7/TAK1 facilitates its interaction with STEEP1, promoting STING1 translocation to COPII vesicles. Ubiquitinated. Ubiquitinated via 'Lys-63'-linked ubiquitin chains in response to double-stranded DNA treatment, leading to relocalization to autophagosomes and subsequent degradation; this process is dependent on SQSTM1. 'Lys-63'-linked ubiquitination mediated by TRIM56 at Lys-150 promotes homodimerization and recruitment of the antiviral kinase TBK1 and subsequent production of IFN-beta. 'Lys-48'-linked polyubiquitination at Lys-150 occurring after viral infection is mediated by RNF5 and leads to proteasomal degradation. 'Lys-11'-linked polyubiquitination at Lys-150 by RNF26 leads to stabilize STING1: it protects STING1 from RNF5-mediated 'Lys-48'-linked polyubiquitination. 'Lys-33'-linked and 'Lys-48'-linked deubiquitinated by USP20; leading to its stabilization and promotion of innate antiviral response. 'Lys-48'-linked deubiquitinated by USP44; leading to its stabilization and promotion of innate antiviral response. 'Lys-63'-linked deubiquitinated by USP49; leading to inhibition of the subsequent recruitment of TBK1 to the signaling complex. 'Lys-63'-linked ubiquitination mediated by RNF39 promotes the activation of the cGAS-STING pathway. In terms of processing, palmitoylation takes place in the Golgi apparatus and creates a platform for the recruitment of TBK1.

The protein localises to the endoplasmic reticulum membrane. It localises to the cytoplasm. Its subcellular location is the perinuclear region. It is found in the endoplasmic reticulum-Golgi intermediate compartment membrane. The protein resides in the golgi apparatus membrane. The protein localises to the cytoplasmic vesicle. It localises to the autophagosome membrane. Its subcellular location is the mitochondrion outer membrane. It is found in the cell membrane. The catalysed reaction is H(+)(in) = H(+)(out). Functionally, facilitator of innate immune signaling that acts as a sensor of cytosolic DNA from bacteria and viruses and promotes the production of type I interferon (IFN-alpha and IFN-beta). Innate immune response is triggered in response to non-CpG double-stranded DNA from viruses and bacteria delivered to the cytoplasm. Acts by binding cyclic dinucleotides: recognizes and binds cyclic di-GMP (c-di-GMP), a second messenger produced by bacteria, cyclic UMP-AMP (2',3'-cUAMP), and cyclic GMP-AMP (cGAMP), a messenger produced by CGAS in response to DNA virus in the cytosol. Upon binding to c-di-GMP or cGAMP, STING oligomerizes, translocates from the endoplasmic reticulum and is phosphorylated by TBK1 on the pLxIS motif, leading to recruitment and subsequent activation of the transcription factor IRF3 to induce expression of type I interferon and exert a potent anti-viral state. Exhibits 2',3' phosphodiester linkage-specific ligand recognition: can bind both 2'-3' linked cGAMP (2'-3'-cGAMP) and 3'-3' linked cGAMP but is preferentially activated by 2'-3' linked cGAMP. The preference for 2'-3'-cGAMP, compared to other linkage isomers is probably due to the ligand itself, whichs adopts an organized free-ligand conformation that resembles the STING1-bound conformation and pays low energy costs in changing into the active conformation. In addition to promote the production of type I interferons, plays a direct role in autophagy. Following cGAMP-binding, STING1 buds from the endoplasmic reticulum into COPII vesicles, which then form the endoplasmic reticulum-Golgi intermediate compartment (ERGIC). The ERGIC serves as the membrane source for WIPI2 recruitment and LC3 lipidation, leading to formation of autophagosomes that target cytosolic DNA or DNA viruses for degradation by the lysosome. Promotes autophagy by acting as a proton channel that directs proton efflux from the Golgi to facilitate MAP1LC3B/LC3B lipidation. The autophagy- and interferon-inducing activities can be uncoupled and autophagy induction is independent of TBK1 phosphorylation. Autophagy is also triggered upon infection by bacteria: following c-di-GMP-binding, which is produced by live Gram-positive bacteria, promotes reticulophagy. May be involved in translocon function, the translocon possibly being able to influence the induction of type I interferons. May be involved in transduction of apoptotic signals via its association with the major histocompatibility complex class II (MHC-II). The protein is Stimulator of interferon genes protein of Bos taurus (Bovine).